Consider the following 207-residue polypeptide: Ribosomal RNA small subunit methyltransferase G (207 aa).

Residues Gly73, Leu78, Val124–Glu125, and Arg139 contribute to the S-adenosyl-L-methionine site.

The protein belongs to the methyltransferase superfamily. RNA methyltransferase RsmG family.

It localises to the cytoplasm. The enzyme catalyses guanosine(527) in 16S rRNA + S-adenosyl-L-methionine = N(7)-methylguanosine(527) in 16S rRNA + S-adenosyl-L-homocysteine. Functionally, specifically methylates the N7 position of guanine in position 527 of 16S rRNA. This is Ribosomal RNA small subunit methyltransferase G from Klebsiella pneumoniae subsp. pneumoniae (strain ATCC 700721 / MGH 78578).